We begin with the raw amino-acid sequence, 622 residues long: Low affinity potassium transport system protein Kup (622 aa).

12 consecutive transmembrane segments (helical) span residues 9–29 (LPAV…TSPL), 52–72 (FLSL…LLFV), 99–119 (TPVL…EVVI), 137–157 (PSLQ…LFFI), 165–185 (VGKL…VLGV), 213–233 (VSFF…ALYA), 247–267 (WFSA…ALLL), 276–296 (PFFL…ATLA), 337–357 (IYIP…IVSF), 363–383 (LAAA…ILSC), 394–414 (LLIV…MFAA), and 419–439 (IFSG…AMIT).

Belongs to the HAK/KUP transporter (TC 2.A.72) family.

The protein localises to the cell inner membrane. The catalysed reaction is K(+)(in) + H(+)(in) = K(+)(out) + H(+)(out). Responsible for the low-affinity transport of potassium into the cell. Likely operates as a K(+):H(+) symporter. The protein is Low affinity potassium transport system protein Kup of Sodalis glossinidius (strain morsitans).